A 132-amino-acid polypeptide reads, in one-letter code: Sec-independent protein translocase protein TatB (132 aa).

Residues 2–22 (FDGIGFMELLLIGILGLVVLG) form a helical membrane-spanning segment. Residues 86 to 132 (LKSAAQSVNRPYKVEDISPASSSAPVDPAPTETKTAETSANSEKPNG) are disordered. The segment covering 103–115 (SPASSSAPVDPAP) has biased composition (low complexity). Residues 117-132 (ETKTAETSANSEKPNG) are compositionally biased toward polar residues.

This sequence belongs to the TatB family. As to quaternary structure, the Tat system comprises two distinct complexes: a TatABC complex, containing multiple copies of TatA, TatB and TatC subunits, and a separate TatA complex, containing only TatA subunits. Substrates initially bind to the TatABC complex, which probably triggers association of the separate TatA complex to form the active translocon.

It is found in the cell inner membrane. Part of the twin-arginine translocation (Tat) system that transports large folded proteins containing a characteristic twin-arginine motif in their signal peptide across membranes. Together with TatC, TatB is part of a receptor directly interacting with Tat signal peptides. TatB may form an oligomeric binding site that transiently accommodates folded Tat precursor proteins before their translocation. In Shewanella sediminis (strain HAW-EB3), this protein is Sec-independent protein translocase protein TatB.